A 57-amino-acid chain; its full sequence is Small ribosomal subunit protein bS21 (57 aa).

The protein belongs to the bacterial ribosomal protein bS21 family.

The polypeptide is Small ribosomal subunit protein bS21 (Phytoplasma australiense).